Here is a 120-residue protein sequence, read N- to C-terminus: uncharacterized protein (120 aa).

It to phage T4 y06Q.

This is an uncharacterized protein from Escherichia coli (strain K12).